Consider the following 846-residue polypeptide: Enhancer of polycomb-like protein 1 (846 aa).

Disordered stretches follow at residues F169–A204, T391–A466, E587–K607, A682–N702, and Q759–Q804. Residues V180–D203 show a composition bias toward basic and acidic residues. The span at P411 to S426 shows a compositional bias: polar residues. Over residues T432–E452 the composition is skewed to basic and acidic residues. Residues K434–A490 adopt a coiled-coil conformation. A compositionally biased stretch (pro residues) spans K686–N702. Low complexity predominate over residues Q759–Q773. A compositionally biased stretch (polar residues) spans N783–L796.

It belongs to the enhancer of polycomb family. Component of the NuA4 histone acetyltransferase complex.

It is found in the nucleus. Its function is as follows. Component of the NuA4 histone acetyltransferase complex which is involved in transcriptional activation of selected genes principally by acetylation of nucleosomal histone H4 and H2A. The NuA4 complex is also involved in DNA repair. Involved in gene silencing by neighboring heterochromatin, blockage of the silencing spreading along the chromosome, and required for cell cycle progression through G2/M. The protein is Enhancer of polycomb-like protein 1 (EPL1) of Cryptococcus neoformans var. neoformans serotype D (strain JEC21 / ATCC MYA-565) (Filobasidiella neoformans).